Here is a 152-residue protein sequence, read N- to C-terminus: Large-conductance mechanosensitive channel (152 aa).

3 helical membrane-spanning segments follow: residues 26–46 (VLDLAVGVVIGAAFSAIVGSA), 50–70 (ILTPFIGLITGGVDFSNLFIT), and 92–112 (IGVFLNAVIQFLIIAFFIFWL).

This sequence belongs to the MscL family. In terms of assembly, homopentamer.

It is found in the cell inner membrane. Channel that opens in response to stretch forces in the membrane lipid bilayer. May participate in the regulation of osmotic pressure changes within the cell. The polypeptide is Large-conductance mechanosensitive channel (Gluconobacter oxydans (strain 621H) (Gluconobacter suboxydans)).